A 163-amino-acid chain; its full sequence is Putative protein CASTOR3P (163 aa).

The protein belongs to the GATS family.

This chain is Putative protein CASTOR3P, found in Homo sapiens (Human).